The following is a 331-amino-acid chain: DSC E3 ubiquitin ligase complex subunit D (331 aa).

Asn-26 carries an N-linked (GlcNAc...) asparagine glycan. The next 3 helical transmembrane spans lie at 63-83 (ILIY…ILFA), 107-127 (PFIG…NFFT), and 159-179 (LFLL…LIVE). The span at 197–214 (VQDHDSEERGVHRTRPES) shows a compositional bias: basic and acidic residues. Residues 197–225 (VQDHDSEERGVHRTRPESRSSVVGAELDE) are disordered.

In terms of assembly, component of the DSC E3 ubiquitin ligase complex composed of dscA, dscB, dscC and dscD.

The protein localises to the endoplasmic reticulum membrane. It functions in the pathway protein modification; protein ubiquitination. Component of the DSC E3 ubiquitin ligase complex which is required for the srbA transcriptional activator proteolytic cleavage to release the soluble transcription factor from the membrane in low oxygen or sterol conditions. Required for growth during hypoxia and triazole drug susceptibility, as well as for virulence in a murine model of invasive pulmonary aspergillosis (IPA). The polypeptide is DSC E3 ubiquitin ligase complex subunit D (Aspergillus fumigatus (strain CBS 144.89 / FGSC A1163 / CEA10) (Neosartorya fumigata)).